Reading from the N-terminus, the 241-residue chain is MTSETPKQYGRVMLKISGEALMGDQGFGLNPPTVARIANEVDSVAKMGVEVCMVIGGGNIFRGLQGSAQGMERTTADYMGMLATVMNALAMQSALEALGHHCRVISAIRMDEVCEPYIRRRAIRHLEKKRIVIFAAGTGNPYFTTDTAATLRASEMNCEAIFKGTKVDGVYDKDPVKHADAKRYGDVSYDEVLQKHLGVMDASAIALARDNKLPIIVFSLDAPGGFRSILAGSGTYTRVHV.

ATP is bound at residue 15 to 18 (KISG). The interval 23-28 (GDQGFG) is involved in allosteric activation by GTP. Position 57 (Gly-57) interacts with UMP. Positions 58 and 62 each coordinate ATP. UMP contacts are provided by residues Asp-77 and 138-145 (TGNPYFTT). Residues Thr-165, Tyr-171, and Asp-174 each coordinate ATP.

It belongs to the UMP kinase family. In terms of assembly, homohexamer.

It is found in the cytoplasm. The enzyme catalyses UMP + ATP = UDP + ADP. It participates in pyrimidine metabolism; CTP biosynthesis via de novo pathway; UDP from UMP (UMPK route): step 1/1. With respect to regulation, allosterically activated by GTP. Inhibited by UTP. Its function is as follows. Catalyzes the reversible phosphorylation of UMP to UDP. This Paracoccus zeaxanthinifaciens protein is Uridylate kinase.